Consider the following 283-residue polypeptide: Large ribosomal subunit protein uL4 (283 aa).

This sequence belongs to the universal ribosomal protein uL4 family. In terms of assembly, part of the 50S ribosomal subunit.

In terms of biological role, one of the primary rRNA binding proteins, this protein initially binds near the 5'-end of the 23S rRNA. It is important during the early stages of 50S assembly. It makes multiple contacts with different domains of the 23S rRNA in the assembled 50S subunit and ribosome. Functionally, forms part of the polypeptide exit tunnel. This is Large ribosomal subunit protein uL4 from Pyrobaculum aerophilum (strain ATCC 51768 / DSM 7523 / JCM 9630 / CIP 104966 / NBRC 100827 / IM2).